Consider the following 1770-residue polypeptide: Transposon Ty2-C Gag-Pol polyprotein (1770 aa).

Polar residues-rich tracts occupy residues 1–11 (MESQQLHQNPR), 19–39 (ASVT…SASN), and 49–60 (KVNSQQETTPGT). Disordered regions lie at residues 1–88 (MESQ…YQQH) and 355–453 (SQYK…LPDH). The interval 295–397 (ENNINVSDRL…SSKPRAAKAH (103 aa)) is RNA-binding. The segment covering 369-382 (TSPNTTNTKVTTRN) has biased composition (low complexity). Polar residues-rich tracts occupy residues 399–408 (IATSSKFSRV) and 415–435 (ESTV…GQQQ). Asp-457 serves as the catalytic For protease activity; shared with dimeric partner. Residues 579–636 (NVNKSKSVNKYPYPLIHRMLGHANFRSIQKSLKKNAVTYLKESDIEWSNASTYQCPDC) form an integrase-type zinc finger-like region. An Integrase catalytic domain is found at 656–831 (ESYEPFQYLH…AGLDITTILP (176 aa)). Residues Asp-667 and Asp-732 each contribute to the Mg(2+) site. 2 disordered regions span residues 1003-1038 (EMGG…MIDL) and 1057-1205 (GGTE…TEIE). Composition is skewed to polar residues over residues 1009–1024 (ESDT…FTAR) and 1065–1082 (QRNS…STPS). Positions 1193–1227 (KKRSLEDNETEIEVSRDTWNNKNMRSLEPPRSKKR) match the Bipartite nuclear localization signal motif. The Reverse transcriptase Ty1/copia-type domain occupies 1353–1491 (NDYYITQLDI…DILGLEIKYQ (139 aa)). Mg(2+) is bound by residues Asp-1361, Asp-1442, Asp-1443, Asp-1625, Glu-1667, and Asp-1700. The 143-residue stretch at 1625-1767 (DASYGNQPYY…IKTFKLLTNK (143 aa)) folds into the RNase H Ty1/copia-type domain.

In terms of assembly, the capsid protein forms a homotrimer, from which the VLPs are assembled. The protease is a homodimer, whose active site consists of two apposed aspartic acid residues. Initially, virus-like particles (VLPs) are composed of the structural unprocessed proteins Gag and Gag-Pol, and also contain the host initiator methionine tRNA (tRNA(i)-Met) which serves as a primer for minus-strand DNA synthesis, and a dimer of genomic Ty RNA. Processing of the polyproteins occurs within the particle and proceeds by an ordered pathway, called maturation. First, the protease (PR) is released by autocatalytic cleavage of the Gag-Pol polyprotein, and this cleavage is a prerequisite for subsequent processing at the remaining sites to release the mature structural and catalytic proteins. Maturation takes place prior to the RT reaction and is required to produce transposition-competent VLPs.

It localises to the cytoplasm. The protein localises to the nucleus. It carries out the reaction DNA(n) + a 2'-deoxyribonucleoside 5'-triphosphate = DNA(n+1) + diphosphate. It catalyses the reaction Endonucleolytic cleavage to 5'-phosphomonoester.. Capsid protein (CA) is the structural component of the virus-like particle (VLP), forming the shell that encapsulates the retrotransposons dimeric RNA genome. The particles are assembled from trimer-clustered units and there are holes in the capsid shells that allow for the diffusion of macromolecules. CA also has nucleocapsid-like chaperone activity, promoting primer tRNA(i)-Met annealing to the multipartite primer-binding site (PBS), dimerization of Ty2 RNA and initiation of reverse transcription. Its function is as follows. The aspartyl protease (PR) mediates the proteolytic cleavages of the Gag and Gag-Pol polyproteins after assembly of the VLP. In terms of biological role, reverse transcriptase/ribonuclease H (RT) is a multifunctional enzyme that catalyzes the conversion of the retro-elements RNA genome into dsDNA within the VLP. The enzyme displays a DNA polymerase activity that can copy either DNA or RNA templates, and a ribonuclease H (RNase H) activity that cleaves the RNA strand of RNA-DNA heteroduplexes during plus-strand synthesis and hydrolyzes RNA primers. The conversion leads to a linear dsDNA copy of the retrotransposon that includes long terminal repeats (LTRs) at both ends. Functionally, integrase (IN) targets the VLP to the nucleus, where a subparticle preintegration complex (PIC) containing at least integrase and the newly synthesized dsDNA copy of the retrotransposon must transit the nuclear membrane. Once in the nucleus, integrase performs the integration of the dsDNA into the host genome. This Saccharomyces cerevisiae (strain ATCC 204508 / S288c) (Baker's yeast) protein is Transposon Ty2-C Gag-Pol polyprotein (TY2B-C).